A 434-amino-acid polypeptide reads, in one-letter code: Methylenetetrahydrofolate--tRNA-(uracil-5-)-methyltransferase TrmFO (434 aa).

Gly-10 to Gly-15 serves as a coordination point for FAD.

The protein belongs to the MnmG family. TrmFO subfamily. Requires FAD as cofactor.

It is found in the cytoplasm. It catalyses the reaction uridine(54) in tRNA + (6R)-5,10-methylene-5,6,7,8-tetrahydrofolate + NADH + H(+) = 5-methyluridine(54) in tRNA + (6S)-5,6,7,8-tetrahydrofolate + NAD(+). It carries out the reaction uridine(54) in tRNA + (6R)-5,10-methylene-5,6,7,8-tetrahydrofolate + NADPH + H(+) = 5-methyluridine(54) in tRNA + (6S)-5,6,7,8-tetrahydrofolate + NADP(+). Functionally, catalyzes the folate-dependent formation of 5-methyl-uridine at position 54 (M-5-U54) in all tRNAs. The protein is Methylenetetrahydrofolate--tRNA-(uracil-5-)-methyltransferase TrmFO of Bacillus cereus (strain AH820).